The following is a 242-amino-acid chain: MEGWQRAFVLHSRPWSETSLMLDVFTEESGRVRLVAKGARSKRSNLKGALQPFTPLLLRYSGRGEVKTLRSAEAVSLALPLSGITLYSGLYINELLSRVLEYETRFSELFFDYLNCIQALAGTTGSPEPALRRFELALLGHLGYGVNFTHCAGSGERVDDTMTYRYREEKGFFASVVIDNNTFTGRHLKALEEREFPDVDTLRASKRFTRMALKPYLGGKPLKSRELFRQFMPKRTVKMKKD.

The protein belongs to the RecO family. In terms of assembly, monomer.

In terms of biological role, involved in DNA repair and RecF pathway recombination. This chain is DNA repair protein RecO, found in Salmonella gallinarum (strain 287/91 / NCTC 13346).